Here is a 106-residue protein sequence, read N- to C-terminus: PAT complex subunit Asterix (106 aa).

The segment covering 1 to 10 (MSANSMSDPR) has biased composition (polar residues). The tract at residues 1 to 29 (MSANSMSDPRSPNKVLRYKPPPSECNPAL) is disordered. An N-acetylserine modification is found at Ser-2. Residues 2 to 32 (SANSMSDPRSPNKVLRYKPPPSECNPALDDP) are Cytoplasmic-facing. Residues 33-51 (TPDYMNLLGMIFSMCGLML) traverse the membrane as a helical segment. A topological domain (lumenal) is located at residue Lys-52. Residues 53-70 (LKWCAWVAVYCSFISFAN) form a helical membrane-spanning segment. The Cytoplasmic portion of the chain corresponds to 71–74 (SRSS). A helical transmembrane segment spans residues 75–95 (EDTKQMMSSFMLSISAVVMSY). Residues 96-106 (LQNPQPMTPPW) are Lumenal-facing.

Belongs to the Asterix family. Component of the PAT complex, composed of WDR83OS/Asterix and CCDC47. The PAT complex is part of the multi-pass translocon (MPT) complex, composed of three subcomplexes, the GEL complex (composed of RAB5IF/OPTI and TMCO1), the BOS complex (composed of NCLN/Nicalin, NOMO1 and TMEM147) and the PAT complex (composed of WDR83OS/Asterix and CCDC47). The MPT complex associates with the SEC61 complex.

Its subcellular location is the endoplasmic reticulum membrane. Its function is as follows. Component of the multi-pass translocon (MPT) complex that mediates insertion of multi-pass membrane proteins into the lipid bilayer of membranes. The MPT complex takes over after the SEC61 complex: following membrane insertion of the first few transmembrane segments of proteins by the SEC61 complex, the MPT complex occludes the lateral gate of the SEC61 complex to promote insertion of subsequent transmembrane regions. Within the MPT complex, the PAT subcomplex sequesters any highly polar regions in the transmembrane domains away from the non-polar membrane environment until they can be buried in the interior of the fully assembled protein. Within the PAT subcomplex, WDR83OS/Asterix binds to and redirects the substrate to a location behind the SEC61 complex. The protein is PAT complex subunit Asterix (WDR83OS) of Sus scrofa (Pig).